A 176-amino-acid chain; its full sequence is ATP-dependent protease subunit HslV (176 aa).

Residue T6 is part of the active site. S161, C164, and T167 together coordinate Na(+).

The protein belongs to the peptidase T1B family. HslV subfamily. A double ring-shaped homohexamer of HslV is capped on each side by a ring-shaped HslU homohexamer. The assembly of the HslU/HslV complex is dependent on binding of ATP.

Its subcellular location is the cytoplasm. The enzyme catalyses ATP-dependent cleavage of peptide bonds with broad specificity.. With respect to regulation, allosterically activated by HslU binding. Functionally, protease subunit of a proteasome-like degradation complex believed to be a general protein degrading machinery. The sequence is that of ATP-dependent protease subunit HslV from Thermosipho africanus (strain TCF52B).